The primary structure comprises 372 residues: Glycerol-3-phosphate dehydrogenase [NAD(+)] (372 aa).

Residues 1-16 (MAPSELNCTHQNQHSS) show a composition bias toward polar residues. The disordered stretch occupies residues 1–23 (MAPSELNCTHQNQHSSGYDGPRS). NAD(+) contacts are provided by residues 29 to 34 (GSGNWG), Phe-60, Phe-117, Lys-140, and Ala-173. Substrate is bound at residue Lys-140. Lys-225 (proton acceptor) is an active-site residue. Positions 289, 318, and 320 each coordinate NAD(+). 289–290 (RN) is a binding site for substrate.

This sequence belongs to the NAD-dependent glycerol-3-phosphate dehydrogenase family.

It catalyses the reaction sn-glycerol 3-phosphate + NAD(+) = dihydroxyacetone phosphate + NADH + H(+). The polypeptide is Glycerol-3-phosphate dehydrogenase [NAD(+)] (GPDH) (Cuphea lanceolata (Cigar flower)).